We begin with the raw amino-acid sequence, 427 residues long: Trigger factor (427 aa).

The 86-residue stretch at 163 to 248 folds into the PPIase FKBP-type domain; that stretch reads GDTVVIDFVG…VHEVKAKEVP (86 aa).

The protein belongs to the FKBP-type PPIase family. Tig subfamily.

The protein resides in the cytoplasm. The enzyme catalyses [protein]-peptidylproline (omega=180) = [protein]-peptidylproline (omega=0). Functionally, involved in protein export. Acts as a chaperone by maintaining the newly synthesized protein in an open conformation. Functions as a peptidyl-prolyl cis-trans isomerase. This is Trigger factor from Streptococcus equi subsp. zooepidemicus (strain MGCS10565).